Here is a 97-residue protein sequence, read N- to C-terminus: Aspartyl/glutamyl-tRNA(Asn/Gln) amidotransferase subunit C (97 aa).

It belongs to the GatC family. In terms of assembly, heterotrimer of A, B and C subunits.

The catalysed reaction is L-glutamyl-tRNA(Gln) + L-glutamine + ATP + H2O = L-glutaminyl-tRNA(Gln) + L-glutamate + ADP + phosphate + H(+). The enzyme catalyses L-aspartyl-tRNA(Asn) + L-glutamine + ATP + H2O = L-asparaginyl-tRNA(Asn) + L-glutamate + ADP + phosphate + 2 H(+). Its function is as follows. Allows the formation of correctly charged Asn-tRNA(Asn) or Gln-tRNA(Gln) through the transamidation of misacylated Asp-tRNA(Asn) or Glu-tRNA(Gln) in organisms which lack either or both of asparaginyl-tRNA or glutaminyl-tRNA synthetases. The reaction takes place in the presence of glutamine and ATP through an activated phospho-Asp-tRNA(Asn) or phospho-Glu-tRNA(Gln). The protein is Aspartyl/glutamyl-tRNA(Asn/Gln) amidotransferase subunit C of Prochlorococcus marinus (strain MIT 9515).